We begin with the raw amino-acid sequence, 189 residues long: Small ribosomal subunit protein uS5 (189 aa).

One can recognise an S5 DRBM domain in the interval 22–85; it reads LIDKLVTINR…ERAKRGMIRV (64 aa). Residues 164-189 form a disordered region; that stretch reads SVASRRGKKVADLFGPKREKEAPADV. Residues 172–189 show a composition bias toward basic and acidic residues; the sequence is KVADLFGPKREKEAPADV.

It belongs to the universal ribosomal protein uS5 family. Part of the 30S ribosomal subunit. Contacts proteins S4 and S8.

With S4 and S12 plays an important role in translational accuracy. Its function is as follows. Located at the back of the 30S subunit body where it stabilizes the conformation of the head with respect to the body. In Acidiphilium cryptum (strain JF-5), this protein is Small ribosomal subunit protein uS5.